The sequence spans 179 residues: MECIAVNDISYGREAEIWPRDYSMLARRVQFLRFNDILVRLVSNNARIITGYIAKFNPRENLILASDKPKGNKRIEVKLESLAILEELSGNDAFNLSLVPADEFNLQQYTPSRRDYFSICNKCYKQGVGIKIYMKYGQVLTGKTTGVNACQVGVRTSNGNHMQVMFDWVSRITSSDYAE.

In terms of biological role, transcriptional repressor of the FliC phase-1 flagellin. The protein is Repressor of phase 1 flagellin gene (fljA) of Salmonella abortus-equi.